Here is a 701-residue protein sequence, read N- to C-terminus: T-cell immunomodulatory protein homolog (701 aa).

The signal sequence occupies residues M1–S29. Topologically, residues G30 to K657 are extracellular. Residues N148, N180, N217, N258, N458, N522, and N571 are each glycosylated (N-linked (GlcNAc...) asparagine). Residues F658 to I678 traverse the membrane as a helical segment. The Cytoplasmic segment spans residues L679 to G701.

Belongs to the TIP family.

Its subcellular location is the membrane. In terms of biological role, may protect the parasite against attack by the host immune system by immunomodulation. This chain is T-cell immunomodulatory protein homolog, found in Plasmodium yoelii yoelii.